Consider the following 432-residue polypeptide: Putative transposase A625R (432 aa).

The Zn(2+) site is built by C375, C378, C393, and C395.

This sequence in the N-terminal section; belongs to the transposase 2 family. In the C-terminal section; belongs to the transposase 35 family.

This chain is Putative transposase A625R, found in Chlorella (PBCV-1).